The primary structure comprises 155 residues: Sec-independent protein translocase protein TatB (155 aa).

A helical transmembrane segment spans residues Met1–Gly21. The disordered stretch occupies residues Ser109 to Val155. Basic and acidic residues-rich tracts occupy residues Leu119–Glu138 and Thr146–Val155.

Belongs to the TatB family. As to quaternary structure, the Tat system comprises two distinct complexes: a TatABC complex, containing multiple copies of TatA, TatB and TatC subunits, and a separate TatA complex, containing only TatA subunits. Substrates initially bind to the TatABC complex, which probably triggers association of the separate TatA complex to form the active translocon.

It is found in the cell inner membrane. In terms of biological role, part of the twin-arginine translocation (Tat) system that transports large folded proteins containing a characteristic twin-arginine motif in their signal peptide across membranes. Together with TatC, TatB is part of a receptor directly interacting with Tat signal peptides. TatB may form an oligomeric binding site that transiently accommodates folded Tat precursor proteins before their translocation. The sequence is that of Sec-independent protein translocase protein TatB from Helicobacter acinonychis (strain Sheeba).